The sequence spans 201 residues: FMN reductase (NADH) RutF (201 aa).

The tract at residues 169 to 201 (APRSGAAPAEPARAARALGARPAEGPALALRSA) is disordered.

The protein belongs to the non-flavoprotein flavin reductase family. RutF subfamily.

It catalyses the reaction FMNH2 + NAD(+) = FMN + NADH + 2 H(+). In terms of biological role, catalyzes the reduction of FMN to FMNH2 which is used to reduce pyrimidine by RutA via the Rut pathway. In Methylorubrum extorquens (strain ATCC 14718 / DSM 1338 / JCM 2805 / NCIMB 9133 / AM1) (Methylobacterium extorquens), this protein is FMN reductase (NADH) RutF.